The sequence spans 101 residues: Large ribosomal subunit protein uL6m (101 aa).

This sequence belongs to the universal ribosomal protein uL6 family.

It is found in the mitochondrion. This Marchantia polymorpha (Common liverwort) protein is Large ribosomal subunit protein uL6m (RPL6).